The chain runs to 148 residues: 15 kDa excretory/secretory protein (148 aa).

Residues 1-19 form the signal peptide; the sequence is MFFAFAVLLIALATREAYG.

This sequence to T.colubriformis 30 kDa antigenic glycoprotein.

It is found in the secreted. The protein is 15 kDa excretory/secretory protein of Haemonchus contortus (Barber pole worm).